Here is a 45-residue protein sequence, read N- to C-terminus: Keratin-associated protein 22-2 (45 aa).

The protein belongs to the KRTAP type 20 family. Interacts with hair keratins.

In terms of biological role, in the hair cortex, hair keratin intermediate filaments are embedded in an interfilamentous matrix, consisting of hair keratin-associated proteins (KRTAP), which are essential for the formation of a rigid and resistant hair shaft through their extensive disulfide bond cross-linking with abundant cysteine residues of hair keratins. The matrix proteins include the high-sulfur and high-glycine-tyrosine keratins. The chain is Keratin-associated protein 22-2 (KRTAP22-2) from Homo sapiens (Human).